The chain runs to 328 residues: Flotillin-like protein FloA (328 aa).

Transmembrane regions (helical) follow at residues 1–21 (MFGL…LVLF) and 26–46 (VGLW…TLVG).

This sequence belongs to the flotillin-like FloA family. Homooligomerizes.

The protein resides in the cell membrane. Its subcellular location is the membrane raft. Found in functional membrane microdomains (FMM) that may be equivalent to eukaryotic membrane rafts. FMMs are highly dynamic and increase in number as cells age. Flotillins are thought to be important factors in membrane fluidity. In Staphylococcus haemolyticus (strain JCSC1435), this protein is Flotillin-like protein FloA.